The primary structure comprises 267 residues: Pro-opiomelanocortin (267 aa).

The first 26 residues, 1 to 26 (MPRSCCSRSGALLLALLLQASMEVRG), serve as a signal peptide directing secretion. Cysteines 28 and 50 form a disulfide. O-linked (HexNAc...) threonine glycosylation is present at threonine 71. At phenylalanine 87 the chain carries Phenylalanine amide. Disordered stretches follow at residues 88–175 (GRRN…FPLE), 181–200 (TGQR…DGAG), and 222–241 (RMEH…GGFM). Residue asparagine 91 is glycosylated (N-linked (GlcNAc...) asparagine). The span at 121–145 (PEPRSDGAKPGPREGKRSYSMEHFR) shows a compositional bias: basic and acidic residues. Residue glutamate 134 is modified to Glutamic acid 1-amide. Serine 138 bears the N-acetylserine; in Corticotropin mark. Valine 150 carries the valine amide modification. Phosphoserine is present on serine 168. The segment covering 222–237 (RMEHFRWGSPPKDKRY) has biased composition (basic and acidic residues).

Belongs to the POMC family. In terms of processing, specific enzymatic cleavages at paired basic residues yield the different active peptides. Post-translationally, O-glycosylated; reducing sugar is probably N-acetylgalactosamine. In terms of tissue distribution, ACTH and MSH are produced by the pituitary gland.

The protein localises to the secreted. Functionally, stimulates the adrenal glands to release cortisol. Anorexigenic peptide. Increases the pigmentation of skin by increasing melanin production in melanocytes. Its function is as follows. Increases the pigmentation of skin by increasing melanin production in melanocytes. In terms of biological role, endogenous orexigenic opiate. Functionally, endogenous opiate. The chain is Pro-opiomelanocortin (POMC) from Homo sapiens (Human).